The sequence spans 1393 residues: Polarized growth protein RAX2 (1393 aa).

The first 21 residues, 1–21 (MLVQFQQLLLLLISIIKLCQA), serve as a signal peptide directing secretion. At 22–1329 (DDNDNSFFQP…TNKNLSRGKV (1308 aa)) the chain is on the extracellular side. Residues Asn-62, Asn-85, Asn-105, Asn-125, Asn-133, Asn-139, Asn-164, Asn-186, Asn-195, Asn-212, Asn-256, Asn-260, Asn-266, Asn-269, Asn-362, Asn-398, Asn-405, Asn-479, Asn-536, Asn-542, Asn-565, Asn-599, Asn-646, Asn-649, Asn-653, Asn-674, Asn-689, Asn-696, Asn-702, Asn-714, Asn-747, Asn-764, Asn-768, Asn-792, Asn-829, Asn-863, Asn-899, Asn-935, Asn-946, Asn-958, Asn-985, Asn-1020, Asn-1030, Asn-1041, Asn-1213, Asn-1232, Asn-1262, and Asn-1323 are each glycosylated (N-linked (GlcNAc...) asparagine). A helical membrane pass occupies residues 1330-1350 (VGISLACALGSTTLLGLLYII). At 1351-1393 (PYFALFKNRKDGYFQPERIHEDEMMDAVNPEDLLHEIDLQREK) the chain is on the cytoplasmic side.

It belongs to the RAX2 family.

The protein resides in the cell membrane. Its subcellular location is the cell tip. Its function is as follows. Required for establishing sites of emergence of yeast and hyphal daughters and for maintaining the linearity of hyphal growth, but not involved in responses that require a reorientation of the direction of already established hyphal growth (tropisms). Does not play a role in penetration or injury of human epithelial cells. The polypeptide is Polarized growth protein RAX2 (Candida albicans (strain SC5314 / ATCC MYA-2876) (Yeast)).